The following is an 877-amino-acid chain: MDKKKLLLIDGSSVAFRAFFALYQQLDRFKNAAGLHTNAIYGFQLMLSHLLERVEPSHILVAFDAGKTTFRTEMYADYKGGRAKTPDEFREQFPFIRELLDHMGIRHYELAQYEADDIIGTLDKLAEQDGFDITIVSGDKDLIQLTDEHTVVEISKKGVAEFEAFTPDYLMEEMGLTPAQFIDLKALMGDKSDNIPGVTKVGEKTGIKLLLEHGSLEGIYENIDGMKTSKMKENLINDKEQAFLSKTLATIDTKAPIAIGLEDLVYSGPDVENLGKFYDEMGFKQLKQALNMSSADVAEGLDFTIVDQISQDMLSEESIFHFELFGENYHTDNLVGFAWSCGDQLYATDKLELLQDPIFKDFLEKTSLRVYDFKKVKVLLQRFGVDLQAPAFDIRLAKYLLSTVEDNEIATIASLYGQTYLVDDETFYGKGVKKAIPEREKFLEHLACKLAVLVETEPILLEKLSENGQLELLYDMEQPLAFVLAKMEIAGIVVKKETLLEMQAENELVIEKLTQEIYELAGEEFNVNSPKQLGVLLFEKLGLPLEYTKKTKTGYSTAVDVLERLAPIAPIVKKILDYRQIAKIQSTYVIGLQDWILADGKIHTRYVQDLTQTGRLSSVDPNLQNIPARLEQGRLIRKAFVPEWEDSVLLSSDYSQIELRVLAHISKDEHLIKAFQEGADIHTSTAMRVFGIERPDNVTANDRRNAKAVNFGVVYGISDFGLSNNLGISRKEAKAYIDTYFERFPGIKNYMDEVVREARDKGYVETLFKRRRELPDINSRNFNIRGFAERTAINSPIQGSAADILKIAMIQLDKALVAGGYQTKMLLQVHDEIVLEVPKSELVEMKKLVKQTMEEAIQLSVPLIADENEGATWYEAK.

A 5'-3' exonuclease domain is found at 177-270 (TPAQFIDLKA…LEDLVYSGPD (94 aa)). Residues 302-465 (DFTIVDQISQ…TEPILLEKLS (164 aa)) form the 3'-5' exonuclease domain.

This sequence belongs to the DNA polymerase type-A family. Single-chain monomer with multiple functions.

It carries out the reaction DNA(n) + a 2'-deoxyribonucleoside 5'-triphosphate = DNA(n+1) + diphosphate. In addition to polymerase activity, this DNA polymerase exhibits 3'-5' and 5'-3' exonuclease activity. The protein is DNA polymerase I (polA) of Streptococcus pneumoniae (strain ATCC BAA-255 / R6).